The sequence spans 79 residues: Small ribosomal subunit protein bS18 (79 aa).

This sequence belongs to the bacterial ribosomal protein bS18 family. Part of the 30S ribosomal subunit. Forms a tight heterodimer with protein bS6.

Its function is as follows. Binds as a heterodimer with protein bS6 to the central domain of the 16S rRNA, where it helps stabilize the platform of the 30S subunit. The protein is Small ribosomal subunit protein bS18 of Streptococcus pneumoniae serotype 19F (strain G54).